The primary structure comprises 218 residues: Peptide deformylase 1 (218 aa).

Cys126 and His168 together coordinate Fe cation. The active site involves Glu169. His172 serves as a coordination point for Fe cation.

This sequence belongs to the polypeptide deformylase family. Fe(2+) serves as cofactor.

The catalysed reaction is N-terminal N-formyl-L-methionyl-[peptide] + H2O = N-terminal L-methionyl-[peptide] + formate. Its function is as follows. Removes the formyl group from the N-terminal Met of newly synthesized proteins. Requires at least a dipeptide for an efficient rate of reaction. N-terminal L-methionine is a prerequisite for activity but the enzyme has broad specificity at other positions. This is Peptide deformylase 1 from Streptomyces coelicolor (strain ATCC BAA-471 / A3(2) / M145).